Here is a 125-residue protein sequence, read N- to C-terminus: Oxytocin-neurophysin 1 (125 aa).

The N-terminal stretch at 1 to 19 is a signal peptide; the sequence is MAGPSLACCLLGLLALTSA. A disulfide bond links Cys-20 and Cys-25. Gly-28 is modified (glycine amide). 7 disulfide bridges follow: Cys-41-Cys-85, Cys-44-Cys-58, Cys-52-Cys-75, Cys-59-Cys-65, Cys-92-Cys-104, Cys-98-Cys-116, and Cys-105-Cys-110.

This sequence belongs to the vasopressin/oxytocin family. Interacts with oxytocin receptor (Ki=1.5 nM). Interacts with vasopressin V1aR/AVPR1A (Ki=37 nM), V1bR/AVPR1B (Ki=222 nM), and V2R/AVPR2 receptors (Ki=823 nM).

Its function is as follows. Neurophysin 1 specifically binds oxytocin. Oxytocin causes contraction of the smooth muscle of the uterus and of the mammary gland. Acts by binding to oxytocin receptor (OXTR). This chain is Oxytocin-neurophysin 1 (OXT), found in Sus scrofa (Pig).